A 475-amino-acid polypeptide reads, in one-letter code: Aspartyl/glutamyl-tRNA(Asn/Gln) amidotransferase subunit B (475 aa).

It belongs to the GatB/GatE family. GatB subfamily. Heterotrimer of A, B and C subunits.

The enzyme catalyses L-glutamyl-tRNA(Gln) + L-glutamine + ATP + H2O = L-glutaminyl-tRNA(Gln) + L-glutamate + ADP + phosphate + H(+). It catalyses the reaction L-aspartyl-tRNA(Asn) + L-glutamine + ATP + H2O = L-asparaginyl-tRNA(Asn) + L-glutamate + ADP + phosphate + 2 H(+). Its function is as follows. Allows the formation of correctly charged Asn-tRNA(Asn) or Gln-tRNA(Gln) through the transamidation of misacylated Asp-tRNA(Asn) or Glu-tRNA(Gln) in organisms which lack either or both of asparaginyl-tRNA or glutaminyl-tRNA synthetases. The reaction takes place in the presence of glutamine and ATP through an activated phospho-Asp-tRNA(Asn) or phospho-Glu-tRNA(Gln). The polypeptide is Aspartyl/glutamyl-tRNA(Asn/Gln) amidotransferase subunit B (Bacillus anthracis (strain A0248)).